The primary structure comprises 148 residues: uncharacterized protein (148 aa).

The next 2 helical transmembrane spans lie at 16 to 36 (IVGAVIFSMSIIVILYISIIL) and 41 to 61 (LSFSIILAVDILIIALFAYIF).

This sequence to M.jannaschii MJ0696.

The protein localises to the cell membrane. This is an uncharacterized protein from Methanocaldococcus jannaschii (strain ATCC 43067 / DSM 2661 / JAL-1 / JCM 10045 / NBRC 100440) (Methanococcus jannaschii).